We begin with the raw amino-acid sequence, 228 residues long: Large ribosomal subunit protein bL25 (228 aa).

The disordered stretch occupies residues 196-228; sequence EEAAVAEAQSAESAEGKAEAEAEATNEKNKSEA. Residues 209-228 are compositionally biased toward basic and acidic residues; the sequence is AEGKAEAEAEATNEKNKSEA.

Belongs to the bacterial ribosomal protein bL25 family. CTC subfamily. In terms of assembly, part of the 50S ribosomal subunit; part of the 5S rRNA/L5/L18/L25 subcomplex. Contacts the 5S rRNA. Binds to the 5S rRNA independently of L5 and L18.

Functionally, this is one of the proteins that binds to the 5S RNA in the ribosome where it forms part of the central protuberance. The chain is Large ribosomal subunit protein bL25 from Methylorubrum extorquens (strain PA1) (Methylobacterium extorquens).